The sequence spans 422 residues: Calpain-2 catalytic subunit (422 aa).

The 66-residue stretch at 1-66 (QKLIRIRNPW…YSRLEICNLT (66 aa)) folds into the Calpain catalytic domain. Asn8 is an active-site residue. 3 residues coordinate Ca(2+): Glu14, Asp21, and Glu45. The tract at residues 67–236 (PDTLTSDTYK…KKADYQAVDD (170 aa)) is domain III. The linker stretch occupies residues 237-251 (EIEADLEEADVSEDD). Residues 252–422 (IDDGFRRLFA…LISWLCFSVL (171 aa)) form a domain IV region. The Ca(2+) site is built by Ala264, Asp267, Glu269, Glu274, Asp307, Asp309, Thr311, Lys313, Glu318, Asp337, Asp339, Ser341, Thr343, Glu348, Asp380, and Asn383. EF-hand domains follow at residues 294–327 (LSIE…TKIQ) and 324–359 (TKIQ…AGFK). The 34-residue stretch at 389–422 (VRLETLFKIFKQLDPDNTGMIQLDLISWLCFSVL) folds into the EF-hand 3 domain.

The protein belongs to the peptidase C2 family. Forms a heterodimer with a small (regulatory) subunit (CAPNS1). Interacts with CPEB3; this leads to cleavage of CPEB3. Ca(2+) is required as a cofactor. In terms of tissue distribution, ubiquitous.

The protein resides in the cytoplasm. It is found in the cell membrane. It catalyses the reaction Broad endopeptidase specificity.. With respect to regulation, activated by 200-1000 micromolar concentrations of calcium and inhibited by calpastatin. Its function is as follows. Calcium-regulated non-lysosomal thiol-protease which catalyzes limited proteolysis of substrates involved in cytoskeletal remodeling and signal transduction. Proteolytically cleaves MYOC at 'Arg-226'. Proteolytically cleaves CPEB3 following neuronal stimulation which abolishes CPEB3 translational repressor activity, leading to translation of CPEB3 target mRNAs. The sequence is that of Calpain-2 catalytic subunit (CAPN2) from Oryctolagus cuniculus (Rabbit).